The sequence spans 474 residues: 3-isopropylmalate dehydratase large subunit (474 aa).

[4Fe-4S] cluster-binding residues include Cys-353, Cys-414, and Cys-417.

This sequence belongs to the aconitase/IPM isomerase family. LeuC type 1 subfamily. In terms of assembly, heterodimer of LeuC and LeuD. [4Fe-4S] cluster is required as a cofactor.

It catalyses the reaction (2R,3S)-3-isopropylmalate = (2S)-2-isopropylmalate. Its pathway is amino-acid biosynthesis; L-leucine biosynthesis; L-leucine from 3-methyl-2-oxobutanoate: step 2/4. Catalyzes the isomerization between 2-isopropylmalate and 3-isopropylmalate, via the formation of 2-isopropylmaleate. In Pseudomonas aeruginosa (strain LESB58), this protein is 3-isopropylmalate dehydratase large subunit.